The sequence spans 684 residues: Fermitin family homolog 2 (684 aa).

An interaction with membranes containing phosphatidylinositol phosphate region spans residues 40 to 81 (HIGGVMLKLVEKLDVKKDWSDHALWWEKKKTWLLKTHWTLDK). The segment at 141 to 163 (LRKPRDPKKKKKKLEDAEEETLE) is disordered. Residues 279–577 (DLNPKYDAIR…SLPEFGITHF (299 aa)) form the FERM domain. The PH domain occupies 378 to 474 (KVFKPKKLTL…WMAACRLASK (97 aa)). Lysine 381 serves as a coordination point for a 1,2-diacyl-sn-glycero-3-phospho-(1D-myo-inositol-3,4,5-trisphosphate).

It belongs to the kindlin family.

The protein localises to the cytoplasm. The protein resides in the cell cortex. It localises to the cytoskeleton. It is found in the stress fiber. Its subcellular location is the cell junction. The protein localises to the focal adhesion. The protein resides in the membrane. It localises to the cell projection. It is found in the lamellipodium membrane. Its subcellular location is the nucleus. The protein localises to the myofibril. The protein resides in the sarcomere. It localises to the i band. It is found in the cell surface. Functionally, scaffolding protein that enhances integrin activation mediated by TLN1 and/or TLN2, but activates integrins only weakly by itself. Binds to membranes enriched in phosphoinositides. Enhances integrin-mediated cell adhesion onto the extracellular matrix and cell spreading; this requires both its ability to interact with integrins and with phospholipid membranes. Required for the assembly of focal adhesions. Participates in the connection between extracellular matrix adhesion sites and the actin cytoskeleton and also in the orchestration of actin assembly and cell shape modulation. Plays a role in the TGFB1 and integrin signaling pathways. Stabilizes active CTNNB1 and plays a role in the regulation of transcription mediated by CTNNB1 and TCF7L2/TCF4 and in Wnt signaling. Required for normal embryonic development, including normal heart morphogenesis and normal angiogenesis. This Danio rerio (Zebrafish) protein is Fermitin family homolog 2 (fermt2).